Here is a 237-residue protein sequence, read N- to C-terminus: Cysteine-rich venom protein DIS1 (237 aa).

Positions 1-18 (MFVFILLSLAAVLQQSFG) are cleaved as a signal peptide. Residues 37–165 (VDKHNAFRRS…SYNYFYVCQY (129 aa)) enclose the SCP domain. 7 cysteine pairs are disulfide-bonded: C74/C152, C91/C166, C147/C163, C185/C192, C188/C197, C201/C234, and C219/C232. One can recognise a ShKT domain in the interval 201–234 (CSREDVFMNCKSLVAQSNCQDDYIRKNCPATCFC).

It belongs to the CRISP family. In terms of tissue distribution, expressed by the venom gland.

It is found in the secreted. Its function is as follows. Weakly blocks contraction of smooth muscle elicited by high potassium-induced depolarization, but does not block caffeine-stimulated contraction. May target voltage-gated calcium channels on smooth muscle. This is Cysteine-rich venom protein DIS1 from Dispholidus typus (Boomslang).